We begin with the raw amino-acid sequence, 287 residues long: ATP synthase gamma chain (287 aa).

It belongs to the ATPase gamma chain family. In terms of assembly, F-type ATPases have 2 components, CF(1) - the catalytic core - and CF(0) - the membrane proton channel. CF(1) has five subunits: alpha(3), beta(3), gamma(1), delta(1), epsilon(1). CF(0) has three main subunits: a, b and c.

Its subcellular location is the cell inner membrane. Produces ATP from ADP in the presence of a proton gradient across the membrane. The gamma chain is believed to be important in regulating ATPase activity and the flow of protons through the CF(0) complex. The protein is ATP synthase gamma chain of Azotobacter vinelandii (strain DJ / ATCC BAA-1303).